Reading from the N-terminus, the 808-residue chain is Quinoprotein glucose dehydrogenase (808 aa).

Positions 1–33 are cleaved as a signal peptide; sequence MSTTSRPGLWALITAAVFALCGAILTVGGAWVA. 4 helical membrane passes run 35-54, 59-76, 94-108, and 123-138; these read IGGP…TAFL, NPAA…TVIW, IVII…PFVS, and GAVG…SLFT. Catalysis depends on Asp470, which acts as the Proton acceptor. Positions 514 to 545 are disordered; the sequence is VPAPETPVPQGAAPGDHTSPTQPMSQLTLRPK. The segment covering 531 to 541 has biased composition (polar residues); it reads TSPTQPMSQLT.

This sequence belongs to the bacterial PQQ dehydrogenase family. Requires pyrroloquinoline quinone as cofactor.

It is found in the cell inner membrane. It carries out the reaction a ubiquinone + D-glucose = D-glucono-1,5-lactone + a ubiquinol. The protein is Quinoprotein glucose dehydrogenase (gdh) of Gluconobacter oxydans (strain 621H) (Gluconobacter suboxydans).